The following is a 495-amino-acid chain: Tripartite motif-containing protein 5 (495 aa).

A2 bears the N-acetylalanine mark. An RING-type zinc finger spans residues 15–60 (CPICLELLTEPLSLHCGHSFCQACITANHKKSMLYKEGERSCPVCR). Position 87 is a phosphoserine (S87). The B box-type zinc finger occupies 92–133 (QKVDHCARHGEKLLLFCQEDSKVICWLCERSQEHRGHHTFLM). 4 residues coordinate Zn(2+): C97, H100, C119, and H125. The stretch at 137-223 (AQEYHVKLQT…KSLTKSETKM (87 aa)) forms a coiled coil. The tract at residues 187–200 (FEQLREILDREESN) is required for interaction with GABARAP and for autophagy. The 213-residue stretch at 283-495 (LKGMLDMFRE…VPMTLCSPSS (213 aa)) folds into the B30.2/SPRY domain.

The protein belongs to the TRIM/RBCC family. In terms of assembly, can form homodimers and homotrimers. In addition to lower-order dimerization, also exhibits a higher-order multimerization and both low- and high-order multimerizations are essential for its restriction activity. Interacts with BTBD1 and BTBD2. Interacts with PSMC4, PSMC5, PSMD7 and HSPA8/HSC70. Interacts (via B30.2/SPRY domain) with HSPA1A/B. Interacts with PSMC2, MAP3K7/TAK1, TAB2 and TAB3. Interacts with SQSTM1. Interacts with TRIM6 and TRIM34. Interacts with ULK1 (phosphorylated form), GABARAP, GABARAPL1, GABARAPL2, MAP1LC3A, MAP1LC3C and BECN1. Degraded in a proteasome-independent fashion in the absence of viral infection but in a proteasome-dependent fashion following exposure to restriction sensitive virus. In terms of processing, autoubiquitinated in a RING finger- and UBE2D2-dependent manner. Monoubiquitinated by TRIM21. Deubiquitinated by Yersinia YopJ. Ubiquitination may not lead to proteasomal degradation.

Its subcellular location is the cytoplasm. The protein resides in the nucleus. It catalyses the reaction S-ubiquitinyl-[E2 ubiquitin-conjugating enzyme]-L-cysteine + [acceptor protein]-L-lysine = [E2 ubiquitin-conjugating enzyme]-L-cysteine + N(6)-ubiquitinyl-[acceptor protein]-L-lysine.. The protein operates within protein modification; protein ubiquitination. Functionally, capsid-specific restriction factor that prevents infection from non-host-adapted retroviruses. Blocks viral replication early in the life cycle, after viral entry but before reverse transcription. In addition to acting as a capsid-specific restriction factor, also acts as a pattern recognition receptor that activates innate immune signaling in response to the retroviral capsid lattice. Binding to the viral capsid triggers its E3 ubiquitin ligase activity, and in concert with the heterodimeric ubiquitin conjugating enzyme complex UBE2V1-UBE2N (also known as UBC13-UEV1A complex) generates 'Lys-63'-linked polyubiquitin chains, which in turn are catalysts in the autophosphorylation of the MAP3K7/TAK1 complex (includes TAK1, TAB2, and TAB3). Activation of the MAP3K7/TAK1 complex by autophosphorylation results in the induction and expression of NF-kappa-B and MAPK-responsive inflammatory genes, thereby leading to an innate immune response in the infected cell. Plays a role in regulating autophagy through activation of autophagy regulator BECN1 by causing its dissociation from its inhibitors BCL2 and TAB2. In Macaca nemestrina (Pig-tailed macaque), this protein is Tripartite motif-containing protein 5 (TRIM5).